The sequence spans 401 residues: Beta-ketoadipyl-CoA thiolase (401 aa).

The Acyl-thioester intermediate role is filled by C91. Residues H357 and C387 each act as proton acceptor in the active site.

It belongs to the thiolase-like superfamily. Thiolase family. As to quaternary structure, homotetramer.

The catalysed reaction is succinyl-CoA + acetyl-CoA = 3-oxoadipyl-CoA + CoA. The protein operates within aromatic compound metabolism; beta-ketoadipate pathway; acetyl-CoA and succinyl-CoA from 3-oxoadipate: step 2/2. Catalyzes thiolytic cleavage of beta-ketoadipyl-CoA to succinyl-CoA and acetyl-CoA. This chain is Beta-ketoadipyl-CoA thiolase (pcaF), found in Pseudomonas knackmussii (strain DSM 6978 / CCUG 54928 / LMG 23759 / B13).